Consider the following 502-residue polypeptide: Acetylcholine receptor subunit alpha-type unc-63 (502 aa).

A signal peptide spans Met1 to Ala23. Residues Asn24–Thr263 lie on the Extracellular side of the membrane. The N-linked (GlcNAc...) asparagine glycan is linked to Asn136. Cysteines 151 and 165 form a disulfide. 3 helical membrane-spanning segments follow: residues Val264–Pro284, Leu293–Pro313, and Leu326–Val346. Residues His347–Arg470 are Cytoplasmic-facing. Residues Ile471–Ala491 traverse the membrane as a helical segment.

The protein belongs to the ligand-gated ion channel (TC 1.A.9) family. Acetylcholine receptor (TC 1.A.9.1) subfamily. Component of nicotinic acetylcholine receptor. In muscles, composed of 2 non-alpha subunits lev-1 and unc-29, and 3 alpha subunits unc-38, unc-63 and lev-8. In cholinergic motoneurons, composed of 2 non-alpha subunits acr-2 and acr-3, and 3 alpha subunits unc-38, unc-63 and acr-12. Interacts with lev-10. In terms of tissue distribution, expressed in body wall muscles, in vulval muscles and in neurons.

Its subcellular location is the postsynaptic cell membrane. It is found in the cell membrane. Functionally, alpha subunit of nicotinic acetylcholine receptor (nAChR). Probably acts in cholinergic motoneurons to regulate presynaptic neurotransmitter release, thereby ensuring normal level of excitation of cholinergic motoneurons during locomotion. Involved in nAChR sensitivity to nicotine and levamisole. This Caenorhabditis elegans protein is Acetylcholine receptor subunit alpha-type unc-63 (unc-63).